The chain runs to 408 residues: Argininosuccinate synthase (408 aa).

Residues 11–19 and A38 each bind ATP; that span reads AYSGGLDTS. L-citrulline contacts are provided by Y91 and S96. G121 contributes to the ATP binding site. L-aspartate is bound by residues T123, N127, and D128. Position 127 (N127) interacts with L-citrulline. L-citrulline is bound by residues R131, S182, S191, E267, and Y279.

It belongs to the argininosuccinate synthase family. Type 1 subfamily. In terms of assembly, homotetramer.

Its subcellular location is the cytoplasm. It catalyses the reaction L-citrulline + L-aspartate + ATP = 2-(N(omega)-L-arginino)succinate + AMP + diphosphate + H(+). The protein operates within amino-acid biosynthesis; L-arginine biosynthesis; L-arginine from L-ornithine and carbamoyl phosphate: step 2/3. This Zymomonas mobilis subsp. mobilis (strain ATCC 31821 / ZM4 / CP4) protein is Argininosuccinate synthase.